We begin with the raw amino-acid sequence, 448 residues long: Dual specificity mitogen-activated protein kinase kinase 5 (448 aa).

The tract at residues 18 to 25 is interaction with MAPK7; sequence VIRIKIPN. One can recognise a PB1 domain in the interval 18 to 109; the sequence is VIRIKIPNSG…EPLQIFPRAC (92 aa). The segment at 64-68 is interaction with MAP3K2/MAP3K3; sequence DEDGD. Positions 116–144 are disordered; the sequence is NIHGLKVNTRAGPSQHTSPVVSDSLPSNS. The interaction with MAPK7 stretch occupies residues 117 to 131; sequence IHGLKVNTRAGPSQH. The span at 126–144 shows a compositional bias: polar residues; it reads AGPSQHTSPVVSDSLPSNS. Residues 166–419 enclose the Protein kinase domain; the sequence is IRYRDTLGHG…PEELMGHPFI (254 aa). ATP contacts are provided by residues 172-180 and Lys-195; that span reads LGHGNGGTV. The active-site Proton acceptor is the Asp-283. Residue Ser-311 is modified to Phosphoserine. Position 315 is a phosphothreonine (Thr-315).

Belongs to the protein kinase superfamily. STE Ser/Thr protein kinase family. MAP kinase kinase subfamily. Interacts with PARD6A, MAP3K3 and MAPK7. Forms a complex with SQSTM1 and PRKCZ or PRKCI. Requires Mg(2+) as cofactor. Post-translationally, activated by phosphorylation on Ser/Thr by MAP kinase kinase kinases.

The protein localises to the cytoplasm. The enzyme catalyses L-seryl-[protein] + ATP = O-phospho-L-seryl-[protein] + ADP + H(+). It carries out the reaction L-threonyl-[protein] + ATP = O-phospho-L-threonyl-[protein] + ADP + H(+). It catalyses the reaction L-tyrosyl-[protein] + ATP = O-phospho-L-tyrosyl-[protein] + ADP + H(+). Its function is as follows. Acts as a scaffold for the formation of a ternary MAP3K2/MAP3K3-MAP3K5-MAPK7 signaling complex. Activation of this pathway appears to play a critical role in protecting cells from stress-induced apoptosis, neuronal survival and cardiac development and angiogenesis. As part of the MAPK/ERK signaling pathway, acts as a negative regulator of apoptosis in cardiomyocytes via promotion of STUB1/CHIP-mediated ubiquitination and degradation of ICER-type isoforms of CREM. The protein is Dual specificity mitogen-activated protein kinase kinase 5 (Map2k5) of Mus musculus (Mouse).